Here is a 212-residue protein sequence, read N- to C-terminus: Thymidylate kinase (212 aa).

ATP is bound at residue 10-17 (GIDGCGKT).

It belongs to the thymidylate kinase family.

The catalysed reaction is dTMP + ATP = dTDP + ADP. Phosphorylation of dTMP to form dTDP in both de novo and salvage pathways of dTTP synthesis. This is Thymidylate kinase from Prochlorococcus marinus (strain MIT 9301).